Consider the following 211-residue polypeptide: ATP-dependent Clp protease proteolytic subunit (211 aa).

Serine 107 serves as the catalytic Nucleophile. Histidine 132 is a catalytic residue.

Belongs to the peptidase S14 family. As to quaternary structure, fourteen ClpP subunits assemble into 2 heptameric rings which stack back to back to give a disk-like structure with a central cavity, resembling the structure of eukaryotic proteasomes.

The protein localises to the cytoplasm. It carries out the reaction Hydrolysis of proteins to small peptides in the presence of ATP and magnesium. alpha-casein is the usual test substrate. In the absence of ATP, only oligopeptides shorter than five residues are hydrolyzed (such as succinyl-Leu-Tyr-|-NHMec, and Leu-Tyr-Leu-|-Tyr-Trp, in which cleavage of the -Tyr-|-Leu- and -Tyr-|-Trp bonds also occurs).. Its function is as follows. Cleaves peptides in various proteins in a process that requires ATP hydrolysis. Has a chymotrypsin-like activity. Plays a major role in the degradation of misfolded proteins. In Xanthobacter autotrophicus (strain ATCC BAA-1158 / Py2), this protein is ATP-dependent Clp protease proteolytic subunit.